We begin with the raw amino-acid sequence, 242 residues long: Type III pantothenate kinase (242 aa).

7–14 (DLGNSRFK) lines the ATP pocket. Residues tyrosine 91 and 98–101 (GVDR) each bind substrate. Aspartate 100 (proton acceptor) is an active-site residue. Threonine 121 is an ATP binding site. Threonine 171 lines the substrate pocket.

The protein belongs to the type III pantothenate kinase family. As to quaternary structure, homodimer. NH4(+) is required as a cofactor. Requires K(+) as cofactor.

It localises to the cytoplasm. The enzyme catalyses (R)-pantothenate + ATP = (R)-4'-phosphopantothenate + ADP + H(+). It participates in cofactor biosynthesis; coenzyme A biosynthesis; CoA from (R)-pantothenate: step 1/5. In terms of biological role, catalyzes the phosphorylation of pantothenate (Pan), the first step in CoA biosynthesis. This Xanthomonas campestris pv. campestris (strain B100) protein is Type III pantothenate kinase.